The chain runs to 129 residues: Thioredoxin H7 (129 aa).

Residues serine 6–valine 129 form the Thioredoxin domain. Catalysis depends on nucleophile residues cysteine 55 and cysteine 58. Cysteine 55 and cysteine 58 form a disulfide bridge.

The protein belongs to the thioredoxin family. Plant H-type subfamily.

The protein localises to the cytoplasm. Probable thiol-disulfide oxidoreductase that may be involved in the redox regulation of a number of cytosolic enzymes. The polypeptide is Thioredoxin H7 (TRX7) (Arabidopsis thaliana (Mouse-ear cress)).